The chain runs to 527 residues: UDP-glucuronosyltransferase 2A3 (527 aa).

The first 23 residues, 1 to 23 (MRSDKSALVFLLLQLFCVGCGFC), serve as a signal peptide directing secretion. Residues 24–491 (GKVLVWPCDM…TWFQHYSIDV (468 aa)) lie on the Extracellular side of the membrane. Residue Asn313 is glycosylated (N-linked (GlcNAc...) asparagine). A helical membrane pass occupies residues 492–512 (IGFLLACVATAIFLFTKCFLF). The Cytoplasmic portion of the chain corresponds to 513–527 (SCQKFNKTRKIEKRE).

Belongs to the UDP-glycosyltransferase family.

It is found in the membrane. It carries out the reaction glucuronate acceptor + UDP-alpha-D-glucuronate = acceptor beta-D-glucuronoside + UDP + H(+). In terms of biological role, UDP-glucuronosyltransferases catalyze phase II biotransformation reactions in which lipophilic substrates are conjugated with glucuronic acid to increase water solubility and enhance excretion. They are of major importance in the conjugation and subsequent elimination of potentially toxic xenobiotics and endogenous compounds. The protein is UDP-glucuronosyltransferase 2A3 (UGT2A3) of Homo sapiens (Human).